The primary structure comprises 156 residues: Small ribosomal subunit protein uS7 (156 aa).

Belongs to the universal ribosomal protein uS7 family. As to quaternary structure, part of the 30S ribosomal subunit. Contacts proteins S9 and S11.

Functionally, one of the primary rRNA binding proteins, it binds directly to 16S rRNA where it nucleates assembly of the head domain of the 30S subunit. Is located at the subunit interface close to the decoding center, probably blocks exit of the E-site tRNA. This Lacticaseibacillus casei (strain BL23) (Lactobacillus casei) protein is Small ribosomal subunit protein uS7.